The primary structure comprises 873 residues: MAKEQSGTKEHSPMMRQYLEVKERYPDYLLLFRVGDFYETFFDDAITVSTALNIVLTKRTADIPMAGFPYHASEGYIAKLIKKGYKVAVCDQVEDPADAKGIVRREITDIVTPGVTYSDKLLDDRHNNYLAGVAFLKEGKTLMAGVAFIDVTTAEFRITTLLPEELPHFLAGLHPSEILFSTQEKERTLLLKKSLPSETLISLLEPWMFSEEQSQTVLLRHFKTHSLKGFGIETAGGNRAALVAAGVILQYLEETRQNSLSYITRIGELHHTEFMSLDQQTKRNLEIISSMQDGSLSGSLLQVMDRTRNPMGARLLRRWLQRPLKKLTNIQERHNAVEELVENRTLRESVAEQLAAINDLERSLARIATLRTIPREVRQLGISLAAIPTLQALLSDVTAPRLQALTAALQPLPKLAEQIESAIDPDAGATMRDGGYIRAGYNEELDDLRSIASTAKDRLMQIQQEEREATAISSLKVSYNKVFGYYIEISRANSDKVPAYYEKKQTLVNAERYTIPALKEYEEKILHAEEKSLLLEAELFRNLCQQIATEAATVQANAALLAELDALCSFAECAVAFDYTKPTMHEGTTLSITAGRHPVLERLLGAEESYIPNDCHFDDKQTMLIITGPNMAGKSSYLRQIGLIVLLAQAGSFVPAESASLGVVDRIFTRVGASDNLTSGESTFLVEMNEAANILNNATERSLLLLDEIGRGTSTFDGMSIAWSMCEYIVHTIGAKTLFATHYHELAELEERLKGVVNYNATVVETAERVIFLRKIVRGATDNSYGIEVAKMAGMPNDVISRAREILAGLEKRDVEIPRQKAPKVNTMQISLFEETDNQLRNAVEAVDVNRLTPLEALLELQKLQEMARSGGY.

Residue 628–635 (GPNMAGKS) coordinates ATP.

Belongs to the DNA mismatch repair MutS family.

Its function is as follows. This protein is involved in the repair of mismatches in DNA. It is possible that it carries out the mismatch recognition step. This protein has a weak ATPase activity. The chain is DNA mismatch repair protein MutS from Chlorobium chlorochromatii (strain CaD3).